Here is a 273-residue protein sequence, read N- to C-terminus: Citrate lyase subunit beta-like protein (273 aa).

Substrate-binding residues include Arg64 and Glu112. Mg(2+) is bound by residues Glu112 and Asp138.

This sequence belongs to the HpcH/HpaI aldolase family. Citrate lyase beta subunit-like subfamily. As to quaternary structure, homotrimer. Requires Mg(2+) as cofactor.

In terms of biological role, may play a role in fatty acid biosynthesis. The protein is Citrate lyase subunit beta-like protein (citE) of Mycobacterium tuberculosis (strain CDC 1551 / Oshkosh).